A 294-amino-acid chain; its full sequence is tRNA pseudouridine synthase B (294 aa).

The active-site Nucleophile is the aspartate 40.

It belongs to the pseudouridine synthase TruB family. Type 1 subfamily.

The catalysed reaction is uridine(55) in tRNA = pseudouridine(55) in tRNA. Its function is as follows. Responsible for synthesis of pseudouridine from uracil-55 in the psi GC loop of transfer RNAs. This chain is tRNA pseudouridine synthase B, found in Synechococcus elongatus (strain ATCC 33912 / PCC 7942 / FACHB-805) (Anacystis nidulans R2).